Reading from the N-terminus, the 152-residue chain is Nucleoside diphosphate kinase A (152 aa).

ATP contacts are provided by lysine 12, phenylalanine 60, arginine 88, and threonine 94. A Glycyl lysine isopeptide (Lys-Gly) (interchain with G-Cter in ubiquitin) cross-link involves residue lysine 100. 2 residues coordinate ATP: arginine 105 and asparagine 115. Catalysis depends on histidine 118, which acts as the Pros-phosphohistidine intermediate. A phosphoserine mark is found at serine 120 and serine 122. Residue lysine 124 is modified to N6-acetyllysine. A Phosphoserine modification is found at serine 125.

Belongs to the NDK family. As to quaternary structure, hexamer of two different chains: An and B (A6, A5B, A4B2, A3B3, A2B4, AB5, B6). Interacts with PRUNE1. Component of the SET complex, composed of at least ANP32A, APEX1, HMGB2, NME1, SET and TREX1. Within this complex, interacts directly with SET. Also interacts with TREX1, but only following translocation to the nucleus. Mg(2+) is required as a cofactor.

The protein localises to the cytoplasm. It is found in the nucleus. The enzyme catalyses a 2'-deoxyribonucleoside 5'-diphosphate + ATP = a 2'-deoxyribonucleoside 5'-triphosphate + ADP. It carries out the reaction a ribonucleoside 5'-diphosphate + ATP = a ribonucleoside 5'-triphosphate + ADP. Its activity is regulated as follows. Autophosphorylation at His-118 increases serine/threonine protein kinase activity of the enzyme. Interaction with the SET complex inhibits exonuclease activity. Its function is as follows. Major role in the synthesis of nucleoside triphosphates other than ATP. The ATP gamma phosphate is transferred to the NDP beta phosphate via a ping-pong mechanism, using a phosphorylated active-site intermediate. Possesses nucleoside-diphosphate kinase, serine/threonine-specific protein kinase, geranyl and farnesyl pyrophosphate kinase, histidine protein kinase and 3'-5' exonuclease activities. Involved in cell proliferation, differentiation and development, signal transduction, G protein-coupled receptor endocytosis, and gene expression. Required for neural development including neural patterning and cell fate determination. During GZMA-mediated cell death, works in concert with TREX1. NME1 nicks one strand of DNA and TREX1 removes bases from the free 3' end to enhance DNA damage and prevent DNA end reannealing and rapid repair. The sequence is that of Nucleoside diphosphate kinase A (Nme1) from Mus musculus (Mouse).